The chain runs to 141 residues: HTH-type transcriptional repressor NsrR (141 aa).

Positions 2-129 constitute an HTH rrf2-type domain; that stretch reads QLTSFTDYGL…DNYTLADLVE (128 aa). Positions 28 to 51 form a DNA-binding region, H-T-H motif; the sequence is ISEVTDVYGVSRNHMVKIINQLSR. C91, C96, and C102 together coordinate [2Fe-2S] cluster.

It depends on [2Fe-2S] cluster as a cofactor.

Its function is as follows. Nitric oxide-sensitive repressor of genes involved in protecting the cell against nitrosative stress. May require iron for activity. The polypeptide is HTH-type transcriptional repressor NsrR (Escherichia coli O127:H6 (strain E2348/69 / EPEC)).